Consider the following 438-residue polypeptide: V-type ATP synthase beta chain (438 aa).

This sequence belongs to the ATPase alpha/beta chains family.

Functionally, produces ATP from ADP in the presence of a proton gradient across the membrane. The V-type beta chain is a regulatory subunit. The protein is V-type ATP synthase beta chain of Chlamydia felis (strain Fe/C-56) (Chlamydophila felis).